Here is a 161-residue protein sequence, read N- to C-terminus: MKSLQKGFTLIELMIVVAIIGILAAFAIPAYNDYIARSQAAEGVSLADGLKIRIAENLQDGACKGPDADPSTGVVGNEDVGKFGKAVITDNAYNPDAKEPGDENGCQVLITYGEGTAKDKVSSLIKGKKLQLNQLVNGSYTQGDGTDLPAKFIPNAVKKSQ.

Positions 1–7 (MKSLQKG) are cleaved as a propeptide — leader sequence. At phenylalanine 8 the chain carries N-methylphenylalanine. The chain crosses the membrane as a helical span at residues 8-28 (FTLIELMIVVAIIGILAAFAI). The cysteines at positions 63 and 106 are disulfide-linked.

Belongs to the N-Me-Phe pilin family. As to quaternary structure, the pili are polar flexible filaments of about 5.4 nanometers diameter and 2.5 micrometers average length; they consist of only a single polypeptide chain arranged in a helical configuration of five subunits per turn in the assembled pilus.

Its subcellular location is the fimbrium. It localises to the membrane. In terms of biological role, major component of the type IV fimbriae that plays an essential role in twitching motility, natural transformation, and protease secretion. This is Type IV major fimbrial protein FimA (fimA) from Dichelobacter nodosus (Bacteroides nodosus).